The following is a 180-amino-acid chain: Ribosome rescue factor SmrB (180 aa).

Residues 98–173 (LDLHGLTQLQ…GNAALLVLVA (76 aa)) enclose the Smr domain.

It belongs to the SmrB family. As to quaternary structure, associates with collided ribosomes, but not with correctly translating polysomes.

Its function is as follows. Acts as a ribosome collision sensor. Detects stalled/collided disomes (pairs of ribosomes where the leading ribosome is stalled and a second ribosome has collided with it) and endonucleolytically cleaves mRNA at the 5' boundary of the stalled ribosome. Stalled/collided disomes form a new interface (primarily via the 30S subunits) that binds SmrB. Cleaved mRNA becomes available for tmRNA ligation, leading to ribosomal subunit dissociation and rescue of stalled ribosomes. The protein is Ribosome rescue factor SmrB of Pectobacterium carotovorum subsp. carotovorum (strain PC1).